The chain runs to 30 residues: Cytochrome c oxidase subunit 5C (30 aa).

The chain crosses the membrane as a helical span at residues Val-15–Gly-30.

Belongs to the cytochrome c oxidase subunit 5C family.

The protein localises to the mitochondrion inner membrane. Its function is as follows. This protein is one of the nuclear-coded polypeptide chains of cytochrome c oxidase, the terminal oxidase in mitochondrial electron transport. In Solanum tuberosum (Potato), this protein is Cytochrome c oxidase subunit 5C (COX5C).